A 76-amino-acid polypeptide reads, in one-letter code: Conotoxin Vc6.9 (76 aa).

The first 19 residues, Met1–Ala19, serve as a signal peptide directing secretion. The propeptide occupies Leu20–Glu41. Cystine bridges form between Cys49/Cys63, Cys56/Cys67, and Cys62/Cys72.

Belongs to the conotoxin O2 superfamily. Expressed by the venom duct.

It localises to the secreted. Functionally, inhibits voltage-gated ion channels. The chain is Conotoxin Vc6.9 from Conus victoriae (Queen Victoria cone).